A 425-amino-acid chain; its full sequence is MMIALIQMKNMKCTLKVEETTENQELEGVSFDELVALREENAKLKQENEALKAKLHRLESDWTTSDIVEKVELMDAQFDRIGKIMDKMREPMLFKRDEIELHGDLLARVEGLLRIKNERSEIEFEKDIQCIVGRCFSDENKQRNLEKMIKSFEYDDIADTIALRLTHFIQDPGLRSIVYAMCKAAVLNQNYLNIEVQEIVDVTRQKYTHNARDDIDFYPMFTFDANVPEGVFDHIYKKHYLSPQSAALVHTLSHLDVNVDGNGIAMYHIGSATRFAECSVVYVDGRAYKPIRVMAEYAIFPTLPHEYKGRVEGLLLLHGGLAPITLVRVYHDVNVGGLVTGSIAASVSTLLRNCMLYSFDIYFTPNGVCINAVGNNNFVNIIDINCCGRAFGKAPLDQGSWNRNKFMGHKHGRGSKCKQYKKINS.

Positions 29-64 form a coiled coil; sequence VSFDELVALREENAKLKQENEALKAKLHRLESDWTT.

The chain is Non-structural protein 2 (Segment-6) from Banna virus (BAV).